The sequence spans 372 residues: Glutamate 5-kinase (372 aa).

ATP is bound at residue K9. 3 residues coordinate substrate: S49, D136, and N148. Residues 168–169 (TD) and 210–216 (TGGMKSK) each bind ATP. A PUA domain is found at 276-353 (AGSIEIDSGA…EEALSLTKRS (78 aa)).

It belongs to the glutamate 5-kinase family.

It is found in the cytoplasm. It catalyses the reaction L-glutamate + ATP = L-glutamyl 5-phosphate + ADP. Its pathway is amino-acid biosynthesis; L-proline biosynthesis; L-glutamate 5-semialdehyde from L-glutamate: step 1/2. Its function is as follows. Catalyzes the transfer of a phosphate group to glutamate to form L-glutamate 5-phosphate. This is Glutamate 5-kinase from Shouchella clausii (strain KSM-K16) (Alkalihalobacillus clausii).